Here is a 34-residue protein sequence, read N- to C-terminus: Photosystem II reaction center protein M (34 aa).

A helical membrane pass occupies residues 7 to 27 (GFLATLLFVAVPMLFLIGLYI).

This sequence belongs to the PsbM family. As to quaternary structure, PSII is composed of 1 copy each of membrane proteins PsbA, PsbB, PsbC, PsbD, PsbE, PsbF, PsbH, PsbI, PsbJ, PsbK, PsbL, PsbM, PsbT, PsbX, PsbY, Psb30/Ycf12, peripheral proteins PsbO, CyanoQ (PsbQ), PsbU, PsbV and a large number of cofactors. It forms dimeric complexes.

It is found in the cellular thylakoid membrane. In terms of biological role, one of the components of the core complex of photosystem II (PSII). PSII is a light-driven water:plastoquinone oxidoreductase that uses light energy to abstract electrons from H(2)O, generating O(2) and a proton gradient subsequently used for ATP formation. It consists of a core antenna complex that captures photons, and an electron transfer chain that converts photonic excitation into a charge separation. This subunit is found at the monomer-monomer interface. This is Photosystem II reaction center protein M from Prochlorococcus marinus (strain MIT 9303).